The following is a 546-amino-acid chain: Mercuric reductase (546 aa).

The HMA domain occupies 2-66 (NKFKVNISGM…AIDEANYQAG (65 aa)). Residues Cys13 and Cys16 each coordinate a metal cation. FAD contacts are provided by Ala96, Gly116, and Thr121. Residues Cys122 and Cys127 are joined by a disulfide bond. FAD is bound by residues Lys131 and Ala195. Residues 256-263 (GSGYIGME) and Gly346 contribute to the NAD(+) site. The FAD site is built by Asp387 and Val395. Hg(2+) is bound by residues Cys543 and Cys544.

It belongs to the class-I pyridine nucleotide-disulfide oxidoreductase family. As to quaternary structure, homodimer. Requires FAD as cofactor.

It carries out the reaction Hg + NADP(+) + H(+) = Hg(2+) + NADPH. With respect to regulation, uses NADPH as the preferred electron donor, but shows slight activity with NADH as well. Inhibited by Cu(2+), Cd(2+), Zn(2+) and Co(2+), with Cu(2+) showing the strongest inhibition. Enzyme activity is enhanced by b-mercaptoethanol and NaCl up to concentrations of 500 uM and 100 mM respectively, followed by inhibition at higher concentrations. Resistance to Hg(2+) in bacteria appears to be governed by a specialized system which includes mercuric reductase. MerA protein is responsible for volatilizing mercury as Hg(0). Catalyzes reduction of Hg(2+) to elemental Hg, which is volatile and can diffuse out of cells passively. Plays a pivotal role in mercury resistance and cell protection. This Lysinibacillus sphaericus (Bacillus sphaericus) protein is Mercuric reductase.